The sequence spans 334 residues: MTIRVGINGFGRIGRNFFRAVLERSDDLEVVAVNDLTDNKTLSTLLKFDSIMGRLGQEVEYDDDSITVGGKRIAVYAERDPKNLDWAAHNVDIVIESTGFFTDANAAKAHIEAGAKKVIISAPASNEDATFVYGVNHESYDPENHNVISGASCTTNCLAPMAKVLNDKFGIENGLMTTVHAYTGDQRLHDAPHRDLRRARAAAVNIVPTSTGAAKAVALVLPELKGKLDGYALRVPVITGSATDLTFNTKSEVTVESINAAIKEAAVGEFGETLAYSEEPLVSTDIVHDSHGSIFDAGLTKVSGNTVKVVSWYDNEWGYTCQLLRLTELVASKL.

NAD(+)-binding positions include 12-13 (RI), aspartate 35, arginine 79, and serine 121. Residues 152–154 (SCT), threonine 183, arginine 198, 211–212 (TG), and arginine 234 each bind D-glyceraldehyde 3-phosphate. Cysteine 153 (nucleophile) is an active-site residue. Asparagine 315 is an NAD(+) binding site.

The protein belongs to the glyceraldehyde-3-phosphate dehydrogenase family. Homotetramer.

Its subcellular location is the cytoplasm. The catalysed reaction is D-glyceraldehyde 3-phosphate + phosphate + NAD(+) = (2R)-3-phospho-glyceroyl phosphate + NADH + H(+). It functions in the pathway carbohydrate degradation; glycolysis; pyruvate from D-glyceraldehyde 3-phosphate: step 1/5. Its function is as follows. Catalyzes the oxidative phosphorylation of glyceraldehyde 3-phosphate (G3P) to 1,3-bisphosphoglycerate (BPG) using the cofactor NAD. The first reaction step involves the formation of a hemiacetal intermediate between G3P and a cysteine residue, and this hemiacetal intermediate is then oxidized to a thioester, with concomitant reduction of NAD to NADH. The reduced NADH is then exchanged with the second NAD, and the thioester is attacked by a nucleophilic inorganic phosphate to produce BPG. The chain is Glyceraldehyde-3-phosphate dehydrogenase (gap) from Corynebacterium glutamicum (strain ATCC 13032 / DSM 20300 / JCM 1318 / BCRC 11384 / CCUG 27702 / LMG 3730 / NBRC 12168 / NCIMB 10025 / NRRL B-2784 / 534).